A 192-amino-acid chain; its full sequence is MYQVVLGKVSTLSAGQLPDALIAQAPQGVRRASWLAGRVLLSRALSPLPEMVYGEQGKPAFSAGAPLWFNLSHSGDTIALLLSDEGEVGCDIEVIRPRDNWRSLANAVFSLGEHAEMEAERPEQQLAAFWRIWTRKEAIVKQRGGSAWQIVSVDSTLPSALSVSQCQLDTLSLAVCTPTPFTLTPQTITKAL.

This sequence belongs to the P-Pant transferase superfamily. Gsp/Sfp/HetI/AcpT family.

The enzyme catalyses apo-[ACP] + CoA = holo-[ACP] + adenosine 3',5'-bisphosphate + H(+). Its function is as follows. May be involved in an alternative pathway for phosphopantetheinyl transfer and holo-ACP synthesis. The native apo-protein substrate is unknown. The sequence is that of 4'-phosphopantetheinyl transferase AcpT (acpT) from Salmonella typhimurium (strain LT2 / SGSC1412 / ATCC 700720).